We begin with the raw amino-acid sequence, 449 residues long: POU domain, class 5, transcription factor 1.1 (449 aa).

Disordered stretches follow at residues 79–125 and 170–233; these read ENNQ…SPPN and YPTP…PSES. Positions 97-110 are enriched in basic and acidic residues; that stretch reads SRIKVKEEVVHETD. The span at 170-180 shows a compositional bias: polar residues; sequence YPTPANQSPNT. Over residues 187-199 the composition is skewed to low complexity; the sequence is SSMESSRCSSTNS. The span at 224–233 shows a compositional bias: acidic residues; that stretch reads DNEEEVPSES. The region spanning 227–301 is the POU-specific domain; sequence EEVPSESEME…FLERWVVEAE (75 aa). A DNA-binding region (homeobox) is located at residues 321–380; that stretch reads KRKRRTNIENIVKGTLESYFMKCPKPGAQEMVQIAKELNMDKDVVRVWFCNRRQKGKRQG.

The protein belongs to the POU transcription factor family. Class-5 subfamily. In terms of assembly, interacts with components of the transcription complex that assembles on the vent2-B gene, including vent2 (via C-terminus), smad1 and smad4. Forms a repression complex on the promoters of the gsc and mix2 genes via interactions with the nodal/activin signaling pathway transducers foxh1/fast1, gtf2ird1/wbscr11 and smad2. Forms a repression complex on the promoters of the nodal/nr1 and siamois genes with the maternal factors tcf7l1/tcf3 and vegt. In terms of tissue distribution, highly enriched within the animal half of developing embryos within ectodermal and mesodermal regions. Expressed in the neuroectoderm at the early neurula stage, with expression initially extending to the future hindbrain/midbrain boundary, but later shifting toward the posterior pole where it persists within the tip of the tail in hatching embryos. Expressed at very low levels in the adult kidney.

The protein resides in the nucleus. Functionally, transcription factor that binds to the octamer motif (5'-ATTTGCAT-3'). Activates transcription when directly bound to the octamer DNA sequence, but can form repression complexes with other proteins at the promoter site to inhibit transcription. Binds to the promoter of the vent2-B gene to activate transcription when in the presence of other BMP signaling factors also bound to the promoter. Inhibits the competence of ectodermal cells to respond to BMP during embryogenesis thereby inhibiting epidermal differentiation and promoting neural induction. Antagonizes the activity of nodal/activin signaling by forming a transcriptional repression complex on the gsc and mix2 gene promoters to inhibit their transcription, and thus maintain the undifferentiated state of embryonic cells to prevent them from differentiating prematurely. Acts maternally to inhibit vegt and beta-catenin-activated gene transcription by forming a transcriptional repression complex on the nodal/nr1 and siamois promoters to inhibit their transcription. This chain is POU domain, class 5, transcription factor 1.1 (pou5f1.1), found in Xenopus laevis (African clawed frog).